Reading from the N-terminus, the 601-residue chain is MHVLRTHLAGDLGKETAGQTVTLTGWVSRRRDHGGVIFIDLRDSSGLVQVVFRENDVAEQAHHLRSEFCIKVTGEVEARPEGSENPNLASGAIEVNVTDLEILNEAAPLPFQIDDVSQGGEVGEETRLKYRYLDLRRPNQGAALRLRSQANKAARNVLDSHDFVEIETPTLTRSTPEGARDFLVPARLKPGSWYALPQSPQLFKQLLMVAGMERYYQIARCYRDEDFRADRQPEFTQLDIEMSFVDQDDVIALAEEIVSSLWKLIGYEIPTPIPRMTYADAMRLYGSDKPDLRFDIKIVECTDFFKNTTFRVFQNEYVGAVVMDGGASQPRRQLDAWQEWAKQRGAKGLAYILVGENGELTGPVSKNITDEERAGIAAHVGAKPGDCIFFAAGETKSSRALLGAARNEIAKKLDLIKEGDWAFTWVVDAPLFEPSSDATASGDVALGHSKWTAVHHAFTSPKPEWLDSFDENPGEATAYAYDIVCNGNEIGGGSIRIHRRDVQERVFKVMGITEDEAREKFGFLLDAFAFGAPPHGGIAFGWDRIVSLLGGFSSIRDVIAFPKSGGGVDPLTDAPAPIPLEQRRETGVDFKPKKKTDESAV.

Residue glutamate 177 coordinates L-aspartate. The aspartate stretch occupies residues 201 to 204; it reads QLFK. Arginine 223 serves as a coordination point for L-aspartate. ATP is bound by residues 223–225 and glutamine 232; that span reads RDE. Histidine 455 is an L-aspartate binding site. Glutamate 489 serves as a coordination point for ATP. Arginine 496 is an L-aspartate binding site. 541-544 lines the ATP pocket; sequence GWDR. The segment at 568 to 601 is disordered; it reads VDPLTDAPAPIPLEQRRETGVDFKPKKKTDESAV. Positions 581-601 are enriched in basic and acidic residues; it reads EQRRETGVDFKPKKKTDESAV.

It belongs to the class-II aminoacyl-tRNA synthetase family. Type 1 subfamily. In terms of assembly, homodimer.

It is found in the cytoplasm. It catalyses the reaction tRNA(Asx) + L-aspartate + ATP = L-aspartyl-tRNA(Asx) + AMP + diphosphate. Aspartyl-tRNA synthetase with relaxed tRNA specificity since it is able to aspartylate not only its cognate tRNA(Asp) but also tRNA(Asn). Reaction proceeds in two steps: L-aspartate is first activated by ATP to form Asp-AMP and then transferred to the acceptor end of tRNA(Asp/Asn). The protein is Aspartate--tRNA(Asp/Asn) ligase of Corynebacterium diphtheriae (strain ATCC 700971 / NCTC 13129 / Biotype gravis).